We begin with the raw amino-acid sequence, 141 residues long: Large ribosomal subunit protein bL17 (141 aa).

This sequence belongs to the bacterial ribosomal protein bL17 family. As to quaternary structure, part of the 50S ribosomal subunit. Contacts protein L32.

This Rhizobium meliloti (strain 1021) (Ensifer meliloti) protein is Large ribosomal subunit protein bL17.